The chain runs to 166 residues: Deglycase PfpI (166 aa).

Residues 1 to 166 (MKILFLSANE…WMREFVKLLK (166 aa)) form the PfpI endopeptidase domain. Cys100 functions as the Nucleophile in the catalytic mechanism. The active site involves His101.

The protein belongs to the peptidase C56 family. As to quaternary structure, homooligomer. Exists in two functional species: the predominant form is a homohexamer that comprises about 90% of the total activity, and the minor form is trimeric.

It localises to the cytoplasm. It catalyses the reaction N(omega)-(1-hydroxy-2-oxopropyl)-L-arginyl-[protein] + H2O = lactate + L-arginyl-[protein] + H(+). The catalysed reaction is N(6)-(1-hydroxy-2-oxopropyl)-L-lysyl-[protein] + H2O = lactate + L-lysyl-[protein] + H(+). The enzyme catalyses S-(1-hydroxy-2-oxopropyl)-L-cysteinyl-[protein] + H2O = lactate + L-cysteinyl-[protein] + H(+). It carries out the reaction N(omega)-(1-hydroxy-2-oxoethyl)-L-arginyl-[protein] + H2O = L-arginyl-[protein] + glycolate + H(+). It catalyses the reaction N(6)-(1-hydroxy-2-oxoethyl)-L-lysyl-[protein] + H2O = glycolate + L-lysyl-[protein] + H(+). The catalysed reaction is S-(1-hydroxy-2-oxoethyl)-L-cysteinyl-[protein] + H2O = glycolate + L-cysteinyl-[protein] + H(+). Deglycase that catalyzes the deglycation of the Maillard adducts formed between amino groups of proteins and reactive carbonyl groups of glyoxals. Thus, functions as a protein deglycase that repairs methylglyoxal- and glyoxal-glycated proteins, and releases repaired proteins and lactate or glycolate, respectively. Deglycates cysteine, arginine and lysine residues in proteins, and thus reactivates these proteins by reversing glycation by glyoxals. Thus, was shown to afford full protection against glycation of thioredoxin by glyoxal. Acts on early glycation intermediates (hemithioacetals and aminocarbinols), preventing the formation of advanced glycation endproducts (AGE) that cause irreversible damage. Prevents acrylamide formation in asparagine/glyoxal and asparagine/sugar mixtures, likely by degrading asparagine/glyoxal Maillard adducts formed at high temperatures. Also displays proteolytic activity. Cleaves at the carboxyl side of both basic and hydrophobic residues in the P1 position, indicating trypsin- and chymotrypsin-like specificities. This is Deglycase PfpI from Pyrococcus furiosus (strain ATCC 43587 / DSM 3638 / JCM 8422 / Vc1).